Here is a 500-residue protein sequence, read N- to C-terminus: NAD(P)H-quinone oxidoreductase chain 4, chloroplastic (500 aa).

15 helical membrane passes run Leu4 to Phe24, Ile31 to Phe51, Ile87 to Val107, Pro111 to Ser131, Ile134 to Met154, Phe167 to Leu187, Val207 to Ile227, His242 to Ile262, Ser274 to Thr294, Ile305 to Asp325, Gly330 to Gly350, Thr358 to Phe378, Leu386 to Thr406, Ile416 to Met436, and Ile462 to Val482.

The protein belongs to the complex I subunit 4 family.

The protein localises to the plastid. The protein resides in the chloroplast thylakoid membrane. The enzyme catalyses a plastoquinone + NADH + (n+1) H(+)(in) = a plastoquinol + NAD(+) + n H(+)(out). It catalyses the reaction a plastoquinone + NADPH + (n+1) H(+)(in) = a plastoquinol + NADP(+) + n H(+)(out). This chain is NAD(P)H-quinone oxidoreductase chain 4, chloroplastic, found in Cycas taitungensis (Prince sago).